The sequence spans 252 residues: Aspartate/glutamate leucyltransferase (252 aa).

The protein belongs to the R-transferase family. Bpt subfamily.

The protein localises to the cytoplasm. The enzyme catalyses N-terminal L-glutamyl-[protein] + L-leucyl-tRNA(Leu) = N-terminal L-leucyl-L-glutamyl-[protein] + tRNA(Leu) + H(+). It catalyses the reaction N-terminal L-aspartyl-[protein] + L-leucyl-tRNA(Leu) = N-terminal L-leucyl-L-aspartyl-[protein] + tRNA(Leu) + H(+). Functions in the N-end rule pathway of protein degradation where it conjugates Leu from its aminoacyl-tRNA to the N-termini of proteins containing an N-terminal aspartate or glutamate. This Agrobacterium fabrum (strain C58 / ATCC 33970) (Agrobacterium tumefaciens (strain C58)) protein is Aspartate/glutamate leucyltransferase.